The primary structure comprises 350 residues: Zona pellucida-binding protein 1 (350 aa).

An N-terminal signal peptide occupies residues 1 to 38 (MEASAPDRARRGWRRARAAASPLSRAAVVLLLSALVLR). 3 N-linked (GlcNAc...) asparagine glycosylation sites follow: Asn113, Asn186, and Asn339.

This sequence belongs to the zona pellucida-binding protein Sp38 family. In terms of processing, N-glycosylated. As to expression, expressed in testis. Detected in sperm cells.

The protein localises to the cytoplasmic vesicle. Its subcellular location is the secretory vesicle. It localises to the acrosome. It is found in the secreted. The protein resides in the acrosome membrane. Its function is as follows. Plays a role in acrosome compaction and sperm morphogenesis. Is implicated in sperm-oocyte interaction during fertilization. In Sus scrofa (Pig), this protein is Zona pellucida-binding protein 1 (ZPBP).